We begin with the raw amino-acid sequence, 421 residues long: Histidine--tRNA ligase (421 aa).

The protein belongs to the class-II aminoacyl-tRNA synthetase family. In terms of assembly, homodimer.

It localises to the cytoplasm. The enzyme catalyses tRNA(His) + L-histidine + ATP = L-histidyl-tRNA(His) + AMP + diphosphate + H(+). The protein is Histidine--tRNA ligase of Ureaplasma urealyticum serovar 10 (strain ATCC 33699 / Western).